The chain runs to 149 residues: MADQLTEEQIAEFKEAFSLFDKDGDGTITTKELGTVMRSLGQNPTEAELQDMINEVDADGNGTIDFPEFLTMMARKMKDTDSEEEIREAFRVFDKDGNGYISAAELRHVMTNLGEKLTDEEVDEMIREADIDGDGQVNYEEFVQMMTAK.

A2 carries the N-acetylalanine modification. EF-hand domains are found at residues 8-43 (EQIA…LGQN), 44-79 (PTEA…KMKD), 81-116 (DSEE…LGEK), and 117-149 (LTDE…MTAK). D21 contributes to the Ca(2+) binding site. Position 22 is an N6-acetyllysine; alternate (K22). A Glycyl lysine isopeptide (Lys-Gly) (interchain with G-Cter in SUMO2); alternate cross-link involves residue K22. Residue K22 forms a Glycyl lysine isopeptide (Lys-Gly) (interchain with G-Cter in ubiquitin); alternate linkage. Ca(2+) contacts are provided by D23, D25, T27, and E32. T45 carries the phosphothreonine; by CaMK4 modification. The Ca(2+) site is built by D57, D59, N61, T63, and E68. Residues 77–149 (MKDTDSEEEI…EEFVQMMTAK (73 aa)) form a necessary and sufficient for interaction with PCP4 region. Residue S82 is modified to Phosphoserine. Position 94 (D94) interacts with Ca(2+). K95 bears the N6-acetyllysine mark. Ca(2+) is bound by residues D96, N98, and Y100. Y100 bears the Phosphotyrosine mark. S102 is subject to Phosphoserine. Position 105 (E105) interacts with Ca(2+). T111 is subject to Phosphothreonine. K116 carries the N6,N6,N6-trimethyllysine; alternate modification. K116 bears the N6-methyllysine; alternate mark. Positions 130, 132, 134, and 136 each coordinate Ca(2+). Phosphotyrosine is present on Y139. E141 is a Ca(2+) binding site.

It belongs to the calmodulin family. As to quaternary structure, homotetramer. Interacts with MYO1C, MYO5A and RRAD. Interacts with MYO10. Interacts with CEP97, CCP110, TTN/titin and SRY. Interacts with USP6; the interaction is calcium dependent. Interacts with CDK5RAP2. Interacts with SCN5A. Interacts with RYR1. Interacts with FCHO1. Interacts with MIP in a 1:2 stoichiometry; the interaction with the cytoplasmic domains from two MIP subunits promotes MIP water channel closure. Interacts with ORAI1; this may play a role in the regulation of ORAI1-mediated calcium transport. Interacts with IQCF1. Interacts with SYT7. Interacts with CEACAM1 (via cytoplasmic domain); this interaction is in a calcium dependent manner and reduces homophilic cell adhesion through dissociation of dimer. Interacts with RYR2; regulates RYR2 calcium-release channel activity. Interacts with PCP4; regulates calmodulin calcium-binding. Interacts with the heterotetrameric KCNQ2 and KCNQ3 channel; the interaction is calcium-independent, constitutive and participates in the proper assembly of a functional heterotetrameric M channel. Interacts with alpha-synuclein/SNCA. Interacts with SLC9A1 in a calcium-dependent manner. In the absence of Ca(+2), interacts with GIMAP4 (via IQ domain). Interacts with SCN8A; the interaction modulates the inactivation rate of SCN8A. Interaction with KIF1A; the interaction is increased in presence of calcium and increases neuronal dense core vesicles motility. Interacts with KCNN3. Interacts with KCNQ1 (via C-terminus); forms a heterooctameric structure (with 4:4 KCNQ1:CALM stoichiometry) in a calcium-independent manner. Interacts with PIK3C3; the interaction modulates PIK3C3 kinase activity. Interacts with HINT1; interaction increases in the presence of calcium ions. Interacts with HINT3. Interacts with GARIN2; in mature sperm flagella. Interacts with IQUB. Interacts with SLC26A5 (via STAS domain); this interaction is calcium-dependent and the STAS domain interacts with only one lobe of CALM which is an elongated conformation. Ca(2+)-bound CALM1 binds CNGA1:CNGB1 channel (via CaM1 and CaM2 regions); this interaction modulates the affinity of the channel for cNMPs in response to intracellular Ca(2+) levels. Interacts with ITPR1; this interaction inhibits inositol 1,4,5 trisphosphate binding in both the presence and absence of calcium and 1,4,5 trisphosphate-induced calcium release in the presence of calcium. Component of the SIFI complex. Interacts with KCNN4; this interaction allows channel opening. Interacts with KCNN2; this interaction regulates the channel activity through calcium-binding. (Microbial infection) Interacts with Rubella virus protease/methyltransferase p150. In terms of assembly, (Microbial infection) Interacts with Legionella pneumophila glutamylase SidJ. As to quaternary structure, (Microbial infection) Interacts with C.violaceum CopC. C.violaceum CopC interacts specifically with the apo form of calmodulin. (Microbial infection) Interacts with S.flexneri OspC1 and OspC3. S.flexneri OspC1 and OspC3 interact specifically with the apo form of calmodulin and prevents calcium-binding. Ubiquitination results in a strongly decreased activity. In terms of processing, phosphorylation results in a decreased activity.

Its subcellular location is the cytoplasm. It localises to the cytoskeleton. It is found in the spindle. The protein localises to the spindle pole. The protein resides in the microtubule organizing center. Its subcellular location is the centrosome. It localises to the cell projection. It is found in the cilium. The protein localises to the flagellum. Its activity is regulated as follows. (Microbial infection) Inactivated by S.flexneri OspC1 and OspC3 proteins, which specifically bind the apo-form of calmodulin, thereby preventing calcium-binding and activity. In terms of biological role, calmodulin acts as part of a calcium signal transduction pathway by mediating the control of a large number of enzymes, ion channels, aquaporins and other proteins through calcium-binding. Calcium-binding is required for the activation of calmodulin. Among the enzymes to be stimulated by the calmodulin-calcium complex are a number of protein kinases, such as myosin light-chain kinases and calmodulin-dependent protein kinase type II (CaMK2), and phosphatases. Together with CCP110 and centrin, is involved in a genetic pathway that regulates the centrosome cycle and progression through cytokinesis. Is a regulator of voltage-dependent L-type calcium channels. Mediates calcium-dependent inactivation of CACNA1C. Positively regulates calcium-activated potassium channel activity of KCNN2. Forms a potassium channel complex with KCNQ1 and regulates electrophysiological activity of the channel via calcium-binding. Acts as a sensor to modulate the endoplasmic reticulum contacts with other organelles mediated by VMP1:ATP2A2. Functionally, (Microbial infection) Required for Legionella pneumophila SidJ glutamylase activity. Its function is as follows. (Microbial infection) Required for C.violaceum CopC and S.flexneri OspC3 arginine ADP-riboxanase activity. In Homo sapiens (Human), this protein is Calmodulin-1.